Here is a 142-residue protein sequence, read N- to C-terminus: gSG7 salivary protein (142 aa).

The N-terminal stretch at 1 to 25 (METKLVLALIACGVICLLQTTPTEA) is a signal peptide. 2 cysteine pairs are disulfide-bonded: cysteine 83-cysteine 138 and cysteine 106-cysteine 116.

As to quaternary structure, interacts with host coagulation factor XII (F12) (inactive and activated). Interacts with host high molecular weight kininogen (KNG1) (inactive and activated).

It localises to the secreted. Zn(2+) modulates binding to host coagulation factor XII (F12) and high molecular weight kininogen (KNG1). In terms of biological role, salivary protein with anticoagulant activity. Inhibits activation of host kallikrein-kinin system by preventing the reciprocal activation of coagulation factor XII (F12) and prekallikrein (KLKB1), and subsequent release of bradykinin. Inhibits host factor XII and high molecular weight kininogen (KNG1) binding to negatively charged surfaces. Weakly inhibits the alternative pathway of complement system activation in the host. The sequence is that of gSG7 salivary protein from Anopheles stephensi (Indo-Pakistan malaria mosquito).